The sequence spans 954 residues: Endogenous retrovirus group K member 25 Pol protein (954 aa).

Positions 57–245 constitute a Reverse transcriptase domain; it reads LEKGHIEPSF…TPFHYLGMQI (189 aa). Positions 161 to 164 match the LPQG motif; the sequence is LPQG. The YXDD motif lies at 195 to 198; the sequence is YIDD. The RNase H type-1 domain occupies 460–588; sequence LENALTVFTD…ADLLVSSALI (129 aa). D469, E497, D515, and D580 together coordinate Mg(2+). The Integrase-type zinc-finger motif lies at 585-626; it reads SALIKAQELHALTHVNAAGLKNKFDVTWKLAKDIVQHCTQCQ. Residues H594, H598, C622, and C625 each contribute to the Zn(2+) site. Residues 640 to 801 form the Integrase catalytic domain; it reads RGLCPNALWQ…TSAEQHLTGK (162 aa). Residues 809–857 constitute a DNA-binding region (integrase-type); the sequence is KLIWWKDNKNKTWEIGKVITWGRGFACVSPGENQLPVWIPTRHLKFYNE. Residues 862–888 are disordered; it reads AKKSTSAETETPQSSTVDSQDEQNGDV. Residues 867–879 are compositionally biased toward polar residues; the sequence is SAETETPQSSTVD.

It belongs to the beta type-B retroviral polymerase family. HERV class-II K(HML-2) pol subfamily.

The enzyme catalyses DNA(n) + a 2'-deoxyribonucleoside 5'-triphosphate = DNA(n+1) + diphosphate. It carries out the reaction Endonucleolytic cleavage to 5'-phosphomonoester.. In terms of biological role, early post-infection, the reverse transcriptase converts the viral RNA genome into double-stranded viral DNA. The RNase H domain of the reverse transcriptase performs two functions. It degrades the RNA template and specifically removes the RNA primer from the RNA/DNA hybrid. Following nuclear import, the integrase catalyzes the insertion of the linear, double-stranded viral DNA into the host cell chromosome. Endogenous Pol proteins may have kept, lost or modified their original function during evolution. The protein is Endogenous retrovirus group K member 25 Pol protein (ERVK-25) of Homo sapiens (Human).